Consider the following 88-residue polypeptide: Large ribosomal subunit protein eL34 (88 aa).

Belongs to the eukaryotic ribosomal protein eL34 family.

This is Large ribosomal subunit protein eL34 from Methanobrevibacter smithii (strain ATCC 35061 / DSM 861 / OCM 144 / PS).